Consider the following 430-residue polypeptide: Adenylosuccinate synthetase (430 aa).

Residues 12–18 (GDEGKGK) and 40–42 (GHT) contribute to the GTP site. Aspartate 13 (proton acceptor) is an active-site residue. The Mg(2+) site is built by aspartate 13 and glycine 40. Residues 13 to 16 (DEGK), 38 to 41 (NAGH), threonine 128, arginine 142, glutamine 223, threonine 238, and arginine 302 contribute to the IMP site. Catalysis depends on histidine 41, which acts as the Proton donor. 298–304 (TTTGRPR) is a binding site for substrate. Residues arginine 304, 330 to 332 (SID), and 412 to 414 (SVG) contribute to the GTP site.

It belongs to the adenylosuccinate synthetase family. As to quaternary structure, homodimer. Mg(2+) serves as cofactor.

Its subcellular location is the cytoplasm. The enzyme catalyses IMP + L-aspartate + GTP = N(6)-(1,2-dicarboxyethyl)-AMP + GDP + phosphate + 2 H(+). Its pathway is purine metabolism; AMP biosynthesis via de novo pathway; AMP from IMP: step 1/2. In terms of biological role, plays an important role in the de novo pathway of purine nucleotide biosynthesis. Catalyzes the first committed step in the biosynthesis of AMP from IMP. This chain is Adenylosuccinate synthetase, found in Streptococcus suis (strain 98HAH33).